An 859-amino-acid chain; its full sequence is Low-density lipoprotein receptor-related protein 12 (859 aa).

The signal sequence occupies residues 1-32; the sequence is MACRWSTKESPRWRSALLLLFLAGVYGNGALA. The Extracellular segment spans residues 33 to 492; sequence EHSENVHISG…ENCPVIVPTR (460 aa). 2 disulfides stabilise this stretch: Cys-47–Cys-76 and Cys-103–Cys-122. The 113-residue stretch at 47 to 159 folds into the CUB 1 domain; that stretch reads CGETPEQIRA…KGFRLAYFSG (113 aa). An N-linked (GlcNAc...) asparagine glycan is attached at Asn-75. Residue Asn-146 is glycosylated (N-linked (GlcNAc...) asparagine). LDL-receptor class A domains follow at residues 165 to 201 and 214 to 255; these read NCAC…EICA and PCAY…IDCD. 7 disulfides stabilise this stretch: Cys-166/Cys-178, Cys-173/Cys-191, Cys-185/Cys-200, Cys-215/Cys-232, Cys-222/Cys-245, Cys-239/Cys-254, and Cys-259/Cys-285. The region spanning 259 to 372 is the CUB 2 domain; that stretch reads CGQWLKYFYG…RGFNATYQVD (114 aa). Asn-284 and Asn-366 each carry an N-linked (GlcNAc...) asparagine glycan. LDL-receptor class A domains lie at 374–411, 412–449, and 450–486; these read FCLP…TNCT, MCQK…KNCF, and FCQP…ENCP. Disulfide bonds link Cys-375-Cys-388, Cys-382-Cys-401, Cys-395-Cys-410, Cys-413-Cys-426, Cys-420-Cys-439, Cys-433-Cys-448, Cys-451-Cys-463, Cys-458-Cys-476, and Cys-470-Cys-485. Residue Asn-409 is glycosylated (N-linked (GlcNAc...) asparagine). Asn-441 carries an N-linked (GlcNAc...) asparagine glycan. Residues 493-513 traverse the membrane as a helical segment; sequence VITAAVIGSLICGLLLVIALG. The Cytoplasmic segment spans residues 514 to 859; that stretch reads CTCKLYSLRM…TSDDEALLLC (346 aa). Disordered regions lie at residues 623-678, 693-723, 748-770, and 801-823; these read ADGD…LPQK, ASSS…SPAR, SSLS…REDD, and DQGQ…SNRD. Polar residues-rich tracts occupy residues 748–757 and 801–814; these read SSLSQNQSPL and DQGQ…NATN.

The protein belongs to the LDLR family. May interact with RACK1, ZFYVE9 and NMRK2. In terms of tissue distribution, widely expressed in heart, skeletal muscle, brain, lung, placenta and pancreas, but not in tissues consisting of a large number of epithelial cells, such as liver and kidney. Expressed at very low levels in a number of tumor-derived cell lines.

It localises to the membrane. The protein localises to the coated pit. Probable receptor, which may be involved in the internalization of lipophilic molecules and/or signal transduction. May act as a tumor suppressor. In Homo sapiens (Human), this protein is Low-density lipoprotein receptor-related protein 12 (LRP12).